The primary structure comprises 701 residues: Elongation factor G 2 (701 aa).

Residues 8-290 (NRYRNIGIVA…AVIEFLPAPA (283 aa)) enclose the tr-type G domain. Residues 17–24 (AHVDAGKT), 88–92 (DTPGH), and 142–145 (NKMD) each bind GTP.

It belongs to the TRAFAC class translation factor GTPase superfamily. Classic translation factor GTPase family. EF-G/EF-2 subfamily.

The protein resides in the cytoplasm. Its function is as follows. Catalyzes the GTP-dependent ribosomal translocation step during translation elongation. During this step, the ribosome changes from the pre-translocational (PRE) to the post-translocational (POST) state as the newly formed A-site-bound peptidyl-tRNA and P-site-bound deacylated tRNA move to the P and E sites, respectively. Catalyzes the coordinated movement of the two tRNA molecules, the mRNA and conformational changes in the ribosome. This is Elongation factor G 2 from Pseudoalteromonas atlantica (strain T6c / ATCC BAA-1087).